The following is a 3051-amino-acid chain: Biorientation of chromosomes in cell division protein 1-like 1 (3051 aa).

Residues 1 to 33 (MATNPQPQPPPPAPPPPPPQPQPQPPPPPPGPG) show a composition bias toward pro residues. 5 disordered regions span residues 1-47 (MATN…AGAG), 164-197 (HKEE…SANV), 215-288 (ASAA…CPVE), 301-393 (ILLN…KEDF), and 411-469 (VHTS…VRHA). A compositionally biased stretch (gly residues) spans 34–47 (AGPGAGGAGGAGAG). Over residues 215–227 (ASAARASTETSNA) the composition is skewed to low complexity. Basic and acidic residues predominate over residues 246–263 (STDKERTSEDMADKEKST). S266 is subject to Phosphoserine. A compositionally biased stretch (basic and acidic residues) spans 312–393 (SEQKNKSTDK…KTVEGTKEDF (82 aa)). A compositionally biased stretch (acidic residues) spans 418-443 (SFEEDTEEEVVTSDSMEEGEITSDDE). An N6-acetyllysine modification is found at K473. S482 and S484 each carry phosphoserine. Composition is skewed to basic and acidic residues over residues 497 to 527 (IAKE…EKTK), 549 to 570 (LEPK…EKKV), and 580 to 653 (SRNV…LERE). The tract at residues 497–1203 (IAKEKEERLL…EKHADHRSTL (707 aa)) is disordered. A phosphoserine mark is found at S635 and S659. 2 positions are modified to phosphothreonine: T660 and T733. 6 stretches are compositionally biased toward basic and acidic residues: residues 671–772 (TDTR…EENI), 804–852 (KDGK…KIQK), 866–878 (RRSE…KCDM), 940–966 (KPDK…KPFE), 984–1021 (TQKD…DGHK), and 1028–1075 (SSKD…ENRR). The residue at position 1077 (S1077) is a Phosphoserine. Polar residues-rich tracts occupy residues 1092 to 1103 (NTLSTPSGSSLQ) and 1135 to 1148 (SKTQ…SQQD). Residues S1145 and S1318 each carry the phosphoserine modification. A Phosphothreonine modification is found at T1354. 3 disordered regions span residues 1456–1550 (KLKH…QSEV), 1700–1725 (GSIS…ETEG), and 1760–1890 (VVLG…TGLG). Positions 1465 to 1479 (KVKDISIDVERRNEN) are enriched in basic and acidic residues. A compositionally biased stretch (polar residues) spans 1482-1504 (VDTSAGSGSAPSVLHQRNGQTED). Phosphoserine is present on residues S1531, S1701, and S1710. A phosphoserine mark is found at S2013, S2025, S2128, and S2203. Disordered regions lie at residues 2189–2210 (DFEG…STSK), 2258–2285 (TSSV…TPAE), 2403–2447 (STEE…FAGR), 2472–2519 (EDKS…AKDP), 2615–2635 (DQAS…FPEE), and 2717–3051 (VENS…KAKR). The span at 2191–2207 (EGPMPSAPPEAESPLAS) shows a compositional bias: low complexity. Over residues 2428–2439 (AEKEEKHGKECP) the composition is skewed to basic and acidic residues. Residue S2475 is modified to Phosphoserine. The span at 2483–2492 (GSSTASYSAG) shows a compositional bias: low complexity. Residues S2501 and S2618 each carry the phosphoserine modification. 3 stretches are compositionally biased toward basic and acidic residues: residues 2621 to 2633 (KTGD…KSFP), 2724 to 2746 (TNEE…KDNA), and 2754 to 2767 (VEAD…EERH). Positions 2780–2789 (SEDEPDDNPD) are enriched in acidic residues. The span at 2791 to 2822 (LDSRIETAQRQCPETEPHDTKEENSRDLEELP) shows a compositional bias: basic and acidic residues. Residues 2823 to 2834 (KTSSETNSTTSR) show a composition bias toward polar residues. The segment covering 2848–2864 (TGEKPEQNDDDTIKSQE) has biased composition (basic and acidic residues). Positions 2871–2880 (IKRKRGRPRK) are enriched in basic residues. The segment at residues 2872 to 2884 (KRKRGRPRKYPVE) is a DNA-binding region (a.T hook). The segment covering 2896 to 2910 (DTGIVTVEQSPSSSK) has biased composition (polar residues). A phosphoserine mark is found at S2905 and S2907. Basic residues predominate over residues 2944–2953 (VRRRGRKPKR). Residue S2954 is modified to Phosphoserine. A Phosphothreonine modification is found at T2956. A phosphoserine mark is found at S2958, S2964, and S2973. Glycyl lysine isopeptide (Lys-Gly) (interchain with G-Cter in ubiquitin) cross-links involve residues K2981 and K2982. The segment covering 2985–2998 (ESDEEEEEEEEDEP) has biased composition (acidic residues). S2986 and S3019 each carry phosphoserine. The segment covering 3000–3020 (GATTRSTTRSEAQRSKTQLSP) has biased composition (polar residues). The span at 3039–3051 (QRVEEAPVKKAKR) shows a compositional bias: basic and acidic residues.

It belongs to the BOD1 family. In terms of assembly, interacts (via COMPASS-Shg1 domain) with SETD1A at stalled replication forks; this interaction mediates FANCD2-dependent nucleosome remodeling at reversed forks protecting them from nucleolytic degradation.

It localises to the chromosome. Functionally, component of the fork protection machinery required to protect stalled/damaged replication forks from uncontrolled DNA2-dependent resection. Acts by stabilizing RAD51 at stalled replication forks and protecting RAD51 nucleofilaments from the antirecombinogenic activities of FBH1 and BLM. Does not regulate spindle orientation. The protein is Biorientation of chromosomes in cell division protein 1-like 1 of Homo sapiens (Human).